Reading from the N-terminus, the 714-residue chain is Phosphoribosylformylglycinamidine synthase subunit PurL (714 aa).

His34 is an active-site residue. Tyr37 contacts ATP. Glu78 contacts Mg(2+). Substrate contacts are provided by residues 79–82 (SHNH) and Arg101. His80 serves as the catalytic Proton acceptor. Asp102 is a Mg(2+) binding site. Gln226 is a binding site for substrate. Residue Asp254 participates in Mg(2+) binding. 298–300 (ESQ) is a binding site for substrate. Residues Asp474 and Gly511 each contribute to the ATP site. Residue Asn512 coordinates Mg(2+). Substrate is bound at residue Ser514.

The protein belongs to the FGAMS family. As to quaternary structure, monomer. Part of the FGAM synthase complex composed of 1 PurL, 1 PurQ and 2 PurS subunits.

It localises to the cytoplasm. It catalyses the reaction N(2)-formyl-N(1)-(5-phospho-beta-D-ribosyl)glycinamide + L-glutamine + ATP + H2O = 2-formamido-N(1)-(5-O-phospho-beta-D-ribosyl)acetamidine + L-glutamate + ADP + phosphate + H(+). Its pathway is purine metabolism; IMP biosynthesis via de novo pathway; 5-amino-1-(5-phospho-D-ribosyl)imidazole from N(2)-formyl-N(1)-(5-phospho-D-ribosyl)glycinamide: step 1/2. Its function is as follows. Part of the phosphoribosylformylglycinamidine synthase complex involved in the purines biosynthetic pathway. Catalyzes the ATP-dependent conversion of formylglycinamide ribonucleotide (FGAR) and glutamine to yield formylglycinamidine ribonucleotide (FGAM) and glutamate. The FGAM synthase complex is composed of three subunits. PurQ produces an ammonia molecule by converting glutamine to glutamate. PurL transfers the ammonia molecule to FGAR to form FGAM in an ATP-dependent manner. PurS interacts with PurQ and PurL and is thought to assist in the transfer of the ammonia molecule from PurQ to PurL. The polypeptide is Phosphoribosylformylglycinamidine synthase subunit PurL (Methanothermobacter marburgensis (strain ATCC BAA-927 / DSM 2133 / JCM 14651 / NBRC 100331 / OCM 82 / Marburg) (Methanobacterium thermoautotrophicum)).